Here is a 454-residue protein sequence, read N- to C-terminus: CBL-interacting protein kinase 33 (454 aa).

One can recognise a Protein kinase domain in the interval 13 to 268 (YELGRTIGEG…IPEILEDEWF (256 aa)). Residues 19–27 (IGEGTFAKV) and K42 contribute to the ATP site. D136 (proton acceptor) is an active-site residue. Residues 154–183 (DFGLSALSQQIKDDGLLHTTCGTPNYVAPE) form an activation loop region. Positions 305 to 329 (EEPEALNAFELISMSAGLNLGNLFD) constitute an NAF domain. Residues 335–364 (KRETRFTSKCPPKEIVRKIEEAAKPLGFDV) are PPI.

It belongs to the protein kinase superfamily. CAMK Ser/Thr protein kinase family. SNF1 subfamily. It depends on Mn(2+) as a cofactor.

The enzyme catalyses L-seryl-[protein] + ATP = O-phospho-L-seryl-[protein] + ADP + H(+). It carries out the reaction L-threonyl-[protein] + ATP = O-phospho-L-threonyl-[protein] + ADP + H(+). CIPK serine-threonine protein kinases interact with CBL proteins. Binding of a CBL protein to the regulatory NAF domain of CIPK protein lead to the activation of the kinase in a calcium-dependent manner. In Oryza sativa subsp. japonica (Rice), this protein is CBL-interacting protein kinase 33 (CIPK33).